Reading from the N-terminus, the 163-residue chain is Putative pre-16S rRNA nuclease (163 aa).

This sequence belongs to the YqgF nuclease family.

It is found in the cytoplasm. Its function is as follows. Could be a nuclease involved in processing of the 5'-end of pre-16S rRNA. This is Putative pre-16S rRNA nuclease from Nitrobacter winogradskyi (strain ATCC 25391 / DSM 10237 / CIP 104748 / NCIMB 11846 / Nb-255).